The sequence spans 1544 residues: Lysophospholipase NTE1 (1544 aa).

The Cytoplasmic segment spans residues 1-37; sequence MSTIEIVSTVAEYTEIHSPVSSKFLLPSARDSSSSIS. Residues 38–58 form a helical membrane-spanning segment; the sequence is LFSAIFWFWSWLFFKIMNIFL. Residues 59-76 are Lumenal-facing; that stretch reads YYIPNIIVNLFSVNFQIT. The helical transmembrane segment at 77–97 threads the bilayer; it reads LSLSSIVITLTGIISFCFLIV. The Cytoplasmic segment spans residues 98–1544; it reads RYKYLTRYSK…RKSLYRRSSI (1447 aa). 2 disordered regions span residues 265–312 and 424–552; these read RLFS…RNYP and ESPS…EETE. Positions 275 to 310 are enriched in polar residues; it reads NPASNPLSPDNTGSKSFDPLSSGNFNDTSLSSSDRN. Residues 425–447 show a composition bias toward low complexity; that stretch reads SPSVSINKTSSSSSSLPKKSTTS. 2 stretches are compositionally biased toward polar residues: residues 448 to 458 and 517 to 536; these read LRPLNRNQSSR and QISSNGGPTLKGHSSSTTKF. Residues 537 to 546 show a composition bias toward basic and acidic residues; sequence ENIRDRTFSD. Residues 681 to 811 and 807 to 960 contribute to the a nucleoside 3',5'-cyclic phosphate site; these read SFES…LKSL and KLKS…VANK. The region spanning 1237-1401 is the PNPLA domain; that stretch reads LVLGGGGSRG…LDNLPVMEMK (165 aa). The GXGXXG signature appears at 1241–1246; the sequence is GGGSRG. Residues 1268–1272 carry the GXSXG motif; sequence GTSIG. Residue Ser-1270 is the Nucleophile of the active site. Residue Asp-1388 is the Proton acceptor of the active site. A DGA/G motif is present at residues 1388 to 1390; sequence DGG.

Belongs to the NTE family.

The protein localises to the endoplasmic reticulum membrane. The catalysed reaction is a 1-acyl-sn-glycero-3-phosphocholine + H2O = sn-glycerol 3-phosphocholine + a fatty acid + H(+). Its activity is regulated as follows. Inhibited by organophosphorus esters. In terms of biological role, intracellular phospholipase B that catalyzes the double deacylation of phosphatidylcholine (PC) to glycerophosphocholine (GroPCho). Plays an important role in membrane lipid homeostasis. Responsible for the rapid PC turnover in response to inositol, elevated temperatures, or when choline is present in the growth medium. The polypeptide is Lysophospholipase NTE1 (NTE1) (Debaryomyces hansenii (strain ATCC 36239 / CBS 767 / BCRC 21394 / JCM 1990 / NBRC 0083 / IGC 2968) (Yeast)).